Reading from the N-terminus, the 468-residue chain is MNVMRRLKSIASGRTSISSDPGVDSSLKRPKLDQDNDNLSSRGDDPMQVDQSTDMVVVSQDTVAGTSNVPPPPDQLPEVMNDMRLREDEPHANRGEEDKDMEPPIVNGCGTETGQVITTTVGGRDGKPKQTISYMAQRVVGTGSFGVVFQAKCLETGEQVAIKKVLQDKRYKNRELQIMRLQDHPNVVRLRHSFFSTTDKDELYLNLVLEFVPETVYRALKHYTKMNQHMPIILVQLYTYQICRALNYLHRVVGVCHRDIKPQNLLVNTHTHQLKICDFGSAKMLVPGEPNISYICSRYYRAPELIFGATEYTNAIDMWSGGCVMAELLLGQPLFPGESGIDQLVEIIKILGTPTREEIRCMNPNYTEFKFPQIKAHPWHKIFHKRMPPEAVDLVSRLLQYSPNLRCTALEACAHPFFDDLRAPNVSLPNGRALPPLFNFTAQELAGASTELRQRLIPAHCQGTGNSS.

2 disordered regions span residues 1-53 and 91-112; these read MNVM…DQST and HANR…CGTE. In terms of domain architecture, Protein kinase spans 134 to 418; sequence YMAQRVVGTG…ALEACAHPFF (285 aa). ATP contacts are provided by residues 140–148 and lysine 163; that span reads VGTGSFGVV. The Proton acceptor role is filled by aspartate 259. The residue at position 294 (tyrosine 294) is a Phosphotyrosine.

This sequence belongs to the protein kinase superfamily. CMGC Ser/Thr protein kinase family. GSK-3 subfamily. In terms of processing, autophosphorylated mainly on threonine and serine residues. As to expression, in developing pollen.

The catalysed reaction is L-seryl-[protein] + ATP = O-phospho-L-seryl-[protein] + ADP + H(+). It catalyses the reaction L-threonyl-[protein] + ATP = O-phospho-L-threonyl-[protein] + ADP + H(+). Functionally, may mediate extracellular signals to regulate transcription in differentiating cells. The sequence is that of Shaggy-related protein kinase theta from Brassica napus (Rape).